Consider the following 122-residue polypeptide: RxLR effector protein Avh52 (122 aa).

Positions 1-21 (MRLTSILVLVIAATFHTTGTA) are cleaved as a signal peptide. The short motif at 50-68 (RLLRRVEKDKVDYEQDEQR) is the RxLR-dEER element. Residues 69-86 (SFGALKDAVKKLNPVTAV) are TAP1-binding. The tract at residues 87-98 (KKFFKQRAKRKK) is nuclear localization signal (NLS).

Belongs to the RxLR effector family. As to quaternary structure, interacts with host acetyl transferase TAP1.

It is found in the secreted. Its subcellular location is the host nucleus. Its function is as follows. Effector that suppresses plant defense responses during the early stages of pathogen infection. Suppresses cell death induced by effectors and PAMPs in plant hosts. Interacts with host acetyltransferase TAP1 and causes TAP1 relocation into the nucleus where it acetylates histones H2A and H3 during early infection, thereby promoting susceptibility of host plant to P.sojae. The protein is RxLR effector protein Avh52 of Phytophthora sojae (strain P6497) (Soybean stem and root rot agent).